The primary structure comprises 123 residues: CD59A glycoprotein (123 aa).

A signal peptide spans 1-23 (MRAQRGLILLLLLLAVFCSTAVS). Residues 24–96 (LTCYHCFQPV…CCQFNLCNKS (73 aa)) enclose the UPAR/Ly6 domain. Intrachain disulfides connect Cys26/Cys50, Cys29/Cys37, Cys43/Cys63, Cys69/Cys87, and Cys88/Cys93. A glycan (N-linked (GlcNAc...) asparagine) is linked at Asn40. A glycan (N-linked (GlcNAc...) asparagine) is linked at Asn94. Residues 97-123 (DGSLGKTPLLGTSVLVAILNLCFLSHL) constitute a propeptide, removed in mature form.

In terms of assembly, interacts with T-cell surface antigen CD2. In terms of processing, N- and O-glycosylated. As to expression, expressed in all tissues examined (liver, kidney, spleen, thymus, brain and heart). Low levels in thymus. Also expressed in mononuclear cells, erythrocytes and platelets. Barely detected in neutrophils.

The protein resides in the cell membrane. The protein localises to the secreted. Its function is as follows. Potent inhibitor of the complement membrane attack complex (MAC) action, which protects self-cells from damage during complement activation. Acts by binding to the beta-haipins of C8 (C8A and C8B) components of the assembling MAC, forming an intermolecular beta-sheet that prevents incorporation of the multiple copies of C9 required for complete formation of the osmolytic pore. The chain is CD59A glycoprotein from Mus musculus (Mouse).